A 462-amino-acid chain; its full sequence is ATP synthase subunit beta (462 aa).

149–156 is a binding site for ATP; that stretch reads GGAGVGKT.

Belongs to the ATPase alpha/beta chains family. As to quaternary structure, F-type ATPases have 2 components, CF(1) - the catalytic core - and CF(0) - the membrane proton channel. CF(1) has five subunits: alpha(3), beta(3), gamma(1), delta(1), epsilon(1). CF(0) has three main subunits: a(1), b(2) and c(9-12). The alpha and beta chains form an alternating ring which encloses part of the gamma chain. CF(1) is attached to CF(0) by a central stalk formed by the gamma and epsilon chains, while a peripheral stalk is formed by the delta and b chains.

Its subcellular location is the cell inner membrane. The enzyme catalyses ATP + H2O + 4 H(+)(in) = ADP + phosphate + 5 H(+)(out). Functionally, produces ATP from ADP in the presence of a proton gradient across the membrane. The catalytic sites are hosted primarily by the beta subunits. The chain is ATP synthase subunit beta from Fusobacterium nucleatum subsp. nucleatum (strain ATCC 25586 / DSM 15643 / BCRC 10681 / CIP 101130 / JCM 8532 / KCTC 2640 / LMG 13131 / VPI 4355).